We begin with the raw amino-acid sequence, 808 residues long: DNA gyrase subunit B (808 aa).

The region spanning 429-544 (SELFIVEGDS…KGYLYIAQPP (116 aa)) is the Toprim domain. Residues Glu-435, Asp-509, and Asp-511 each coordinate Mg(2+).

This sequence belongs to the type II topoisomerase GyrB family. Heterotetramer, composed of two GyrA and two GyrB chains. In the heterotetramer, GyrA contains the active site tyrosine that forms a transient covalent intermediate with DNA, while GyrB binds cofactors and catalyzes ATP hydrolysis. Mg(2+) serves as cofactor. The cofactor is Mn(2+). It depends on Ca(2+) as a cofactor.

The protein localises to the cytoplasm. It carries out the reaction ATP-dependent breakage, passage and rejoining of double-stranded DNA.. A type II topoisomerase that negatively supercoils closed circular double-stranded (ds) DNA in an ATP-dependent manner to modulate DNA topology and maintain chromosomes in an underwound state. Negative supercoiling favors strand separation, and DNA replication, transcription, recombination and repair, all of which involve strand separation. Also able to catalyze the interconversion of other topological isomers of dsDNA rings, including catenanes and knotted rings. Type II topoisomerases break and join 2 DNA strands simultaneously in an ATP-dependent manner. This is DNA gyrase subunit B from Rickettsia bellii (strain RML369-C).